We begin with the raw amino-acid sequence, 325 residues long: Beta-ketoacyl-[acyl-carrier-protein] synthase III (325 aa).

Active-site residues include cysteine 119 and histidine 252. The ACP-binding stretch occupies residues 253-257 (QANIR). Residue asparagine 282 is part of the active site.

The protein belongs to the thiolase-like superfamily. FabH family. Homodimer.

The protein resides in the cytoplasm. It carries out the reaction malonyl-[ACP] + acetyl-CoA + H(+) = 3-oxobutanoyl-[ACP] + CO2 + CoA. It functions in the pathway lipid metabolism; fatty acid biosynthesis. In terms of biological role, catalyzes the condensation reaction of fatty acid synthesis by the addition to an acyl acceptor of two carbons from malonyl-ACP. Catalyzes the first condensation reaction which initiates fatty acid synthesis and may therefore play a role in governing the total rate of fatty acid production. Possesses both acetoacetyl-ACP synthase and acetyl transacylase activities. Its substrate specificity determines the biosynthesis of branched-chain and/or straight-chain of fatty acids. In Verminephrobacter eiseniae (strain EF01-2), this protein is Beta-ketoacyl-[acyl-carrier-protein] synthase III.